Consider the following 62-residue polypeptide: Conotoxin Tx5.1 (62 aa).

Positions 1 to 22 (MCCLPVFVILLLLIASAPSVDA) are cleaved as a signal peptide. A propeptide spanning residues 23 to 49 (QPKTKDDVPLAPLHDNAKSALQHLNQR) is cleaved from the precursor. Glutamine 60 bears the Glutamine amide mark.

This sequence belongs to the conotoxin T superfamily. Post-translationally, contains 2 disulfide bonds that can be either 'C1-C3, C2-C4' or 'C1-C4, C2-C3', since these disulfide connectivities have been observed for conotoxins with cysteine framework V (for examples, see AC P0DQQ7 and AC P81755). Expressed by the venom duct.

Its subcellular location is the secreted. In Conus textile (Cloth-of-gold cone), this protein is Conotoxin Tx5.1.